An 840-amino-acid polypeptide reads, in one-letter code: E3 ubiquitin-protein ligase SH3RF1 (840 aa).

The RING-type zinc finger occupies 12 to 53 (CPVCLERLDASAKVLPCQHTFCKRCLLGIVGSRNELRCPECR). Residues 105-129 (VTCSPKDGPSSQGGPQPRAQAWSPP) are disordered. 2 SH3 domains span residues 134–193 (PQLP…IIKP) and 196–259 (QPPP…FNSA). Disordered stretches follow at residues 267–324 (DQPP…RHSM), 394–442 (TLNP…PRPS), 516–545 (GPAS…VAGG), 578–633 (QARS…AASG), 652–723 (AASL…LGAE), and 744–773 (MAPG…SLGP). Over residues 273–282 (GVAAGEGALA) the composition is skewed to low complexity. Over residues 283–292 (TTPSSTTTKQ) the composition is skewed to polar residues. The interaction with RAC1 stretch occupies residues 292–362 (QPDGKKNTKK…APSQVHISTT (71 aa)). Ser-304 is subject to Phosphoserine. 2 stretches are compositionally biased toward low complexity: residues 307 to 320 (SLSM…AAQQ) and 405 to 424 (QAAT…GPRP). Positions 434–537 (HPRPQPRPSV…PSTGGPAQKP (104 aa)) are interaction with AKT2. An SH3 3 domain is found at 439–500 (PRPSVYVAIY…PGNYVAPVTR (62 aa)). The span at 616-625 (SPQPPAPLGP) shows a compositional bias: pro residues. Basic and acidic residues predominate over residues 681 to 692 (RPDKDGKKEKKG). Position 709 is a phosphoserine (Ser-709). Residues 781 to 840 (AVCERHRVVVSYPPQSEAELELKEGDIVFVHKKREDGWFKGTLQRNGKTGLFPGSFVENI) form the SH3 4 domain.

The protein belongs to the SH3RF family. In terms of assembly, interacts with RAC1; in a GTP-dependent manner. Interacts with MAP3K10/MLK2 and MAP3K11/MLK3. Interacts with MAPK8IP; this interaction leads to the PJAC complex (POSH-JIP or SH3RF1/MAPK8IP apoptotic complex) with a 1:1 ratio. Interacts with SIAH1. Interacts with HERP1. Probably part of a signaling complex that may contain SH3RF1, MAPK8IP, DLK1, MAP2K4/MKK4, MAP2K7/MKK7, MAPK8/JNK1, MAPK9/JNK2, AKT1 and AKT2. Found in a complex with RAC2, MAP3K7/TAK1, MAP2K7/MKK7, MAPK8IP1/JIP1, MAPK8/JNK1 and MAPK9/JNK2. Found in a complex with RAC1, MAP3K11/MLK3, MAP2K7/MKK7, MAPK8IP1/JIP1 and MAPK8/JNK1. Interacts with SH3RF2. Phosphorylated at Ser-304 by AKT1 and AKT2. When phosphorylated, it has reduced ability to bind Rac. Post-translationally, autoubiquitinated. Ubiquitinated by SH3RF2, leading to proteasome-mediated degradation.

The protein resides in the cytoplasm. It localises to the perinuclear region. The protein localises to the cell projection. It is found in the lamellipodium. Its subcellular location is the golgi apparatus. The protein resides in the trans-Golgi network. The enzyme catalyses S-ubiquitinyl-[E2 ubiquitin-conjugating enzyme]-L-cysteine + [acceptor protein]-L-lysine = [E2 ubiquitin-conjugating enzyme]-L-cysteine + N(6)-ubiquitinyl-[acceptor protein]-L-lysine.. Its pathway is protein modification; protein ubiquitination. In terms of biological role, has E3 ubiquitin-protein ligase activity. In the absence of an external substrate, it can catalyze self-ubiquitination. Stimulates ubiquitination of potassium channel KCNJ1, enhancing it's dynamin-dependent and clathrin-independent endocytosis. Acts as a scaffold protein that coordinates with MAPK8IP1/JIP1 in organizing different components of the JNK pathway, including RAC1 or RAC2, MAP3K11/MLK3 or MAP3K7/TAK1, MAP2K7/MKK7, MAPK8/JNK1 and/or MAPK9/JNK2 into a functional multiprotein complex to ensure the effective activation of the JNK signaling pathway. Regulates the differentiation of CD4(+) and CD8(+) T-cells and promotes T-helper 1 (Th1) cell differentiation. Regulates the activation of MAPK8/JNK1 and MAPK9/JNK2 in CD4(+) T-cells and the activation of MAPK8/JNK1 in CD8(+) T-cells. Plays a crucial role in the migration of neocortical neurons in the developing brain. Controls proper cortical neuronal migration and the formation of proximal cytoplasmic dilation in the leading process (PCDLP) in migratory neocortical neurons by regulating the proper localization of activated RAC1 and F-actin assembly. The protein is E3 ubiquitin-protein ligase SH3RF1 (SH3RF1) of Bos taurus (Bovine).